Here is a 1120-residue protein sequence, read N- to C-terminus: Hachiman protein HamB (1120 aa).

The region spanning 278–452 (DGELLKNDGF…WIGEDDKAKR (175 aa)) is the Helicase ATP-binding domain. 291–298 (MPTSSGKT) serves as a coordination point for ATP. A DEAH box motif is present at residues 395 to 398 (DEGH). In terms of domain architecture, Helicase C-terminal spans 521-710 (ATATKMLDVG…NIEKATSGLY (190 aa)).

It belongs to the helicase family.

Component of antiviral defense system Hachiman, composed of HamA and HamB. Expression of Hachiman in B.subtilis (strain BEST7003) confers resistance to phages phi105, phi29, phi3T, rho14, SBSphiJ, SpBeta and SPR. Probably a helicase. This Bacillus cereus protein is Hachiman protein HamB.